The chain runs to 77 residues: NAD(P)H-quinone oxidoreductase subunit L (77 aa).

2 helical membrane passes run 12–32 (LVAYVGIVSIYLLVIPLILFY) and 47–67 (LIVYGLVFLFFPGLILFSPFL).

It belongs to the complex I NdhL subunit family. As to quaternary structure, NDH-1 can be composed of about 15 different subunits; different subcomplexes with different compositions have been identified which probably have different functions.

It localises to the cellular thylakoid membrane. The enzyme catalyses a plastoquinone + NADH + (n+1) H(+)(in) = a plastoquinol + NAD(+) + n H(+)(out). It carries out the reaction a plastoquinone + NADPH + (n+1) H(+)(in) = a plastoquinol + NADP(+) + n H(+)(out). Functionally, NDH-1 shuttles electrons from an unknown electron donor, via FMN and iron-sulfur (Fe-S) centers, to quinones in the respiratory and/or the photosynthetic chain. The immediate electron acceptor for the enzyme in this species is believed to be plastoquinone. Couples the redox reaction to proton translocation, and thus conserves the redox energy in a proton gradient. Cyanobacterial NDH-1 also plays a role in inorganic carbon-concentration. This is NAD(P)H-quinone oxidoreductase subunit L from Prochlorococcus marinus subsp. pastoris (strain CCMP1986 / NIES-2087 / MED4).